A 189-amino-acid chain; its full sequence is MIEQANQQIEKDVRDILKQVGDDPERAGVLETPQRVAKMYGEVLAYQGETIFKDYKLFETEETDDDQMVMMQDIPFYSMCEHHMLPFFGQVSVAYLPANGQIIGLSKIPRLVDFVSKRLSVQENLTRDIGQILNQILKPYGVAVQVTARHMCVEMRGIKKANSQTHTTFYSGNFKTDRQLRSEFLQLLK.

Positions 80, 83, and 152 each coordinate Zn(2+).

Belongs to the GTP cyclohydrolase I family. As to quaternary structure, toroid-shaped homodecamer, composed of two pentamers of five dimers.

The enzyme catalyses GTP + H2O = 7,8-dihydroneopterin 3'-triphosphate + formate + H(+). It functions in the pathway cofactor biosynthesis; 7,8-dihydroneopterin triphosphate biosynthesis; 7,8-dihydroneopterin triphosphate from GTP: step 1/1. This chain is GTP cyclohydrolase 1, found in Latilactobacillus sakei subsp. sakei (strain 23K) (Lactobacillus sakei subsp. sakei).